A 288-amino-acid polypeptide reads, in one-letter code: Homoserine kinase (288 aa).

78–88 (PLARGLGSSSS) lines the ATP pocket.

Belongs to the GHMP kinase family. Homoserine kinase subfamily.

The protein resides in the cytoplasm. It carries out the reaction L-homoserine + ATP = O-phospho-L-homoserine + ADP + H(+). It functions in the pathway amino-acid biosynthesis; L-threonine biosynthesis; L-threonine from L-aspartate: step 4/5. Functionally, catalyzes the ATP-dependent phosphorylation of L-homoserine to L-homoserine phosphate. This chain is Homoserine kinase, found in Streptococcus mutans serotype c (strain ATCC 700610 / UA159).